The primary structure comprises 265 residues: Sulfur carrier protein FdhD (265 aa).

The Cysteine persulfide intermediate role is filled by Cys107.

The protein belongs to the FdhD family.

The protein localises to the cytoplasm. Required for formate dehydrogenase (FDH) activity. Acts as a sulfur carrier protein that transfers sulfur from IscS to the molybdenum cofactor prior to its insertion into FDH. The sequence is that of Sulfur carrier protein FdhD from Staphylococcus aureus (strain bovine RF122 / ET3-1).